A 651-amino-acid chain; its full sequence is L-type lectin-domain containing receptor kinase IX.1 (651 aa).

An N-terminal signal peptide occupies residues 1 to 19; that stretch reads MANSILLFSFVLVLPFVCS. The legume-lectin like stretch occupies residues 20-251; that stretch reads VQFNISRFGS…GNRLLSWEFS (232 aa). Residues 20-269 are Extracellular-facing; the sequence is VQFNISRFGS…KKSQNDKKGM (250 aa). Residues Asn-23, Asn-125, Asn-129, Asn-162, Asn-169, Asn-174, Asn-195, and Asn-211 are each glycosylated (N-linked (GlcNAc...) asparagine). A helical transmembrane segment spans residues 270 to 290; the sequence is IIGISVSGFVLLTFFITSLIV. The Cytoplasmic segment spans residues 291–651; it reads FLKRKQQKKK…VTFSSAQHGR (361 aa). The 282-residue stretch at 335–616 folds into the Protein kinase domain; it reads FADDRKLGEG…LNLEAPVPHL (282 aa). ATP-binding positions include 341–349 and Lys-364; that span reads LGEGGFGAV. Residue Asp-459 is the Proton acceptor of the active site. The disordered stretch occupies residues 630-651; it reads SNTTSVSSGGATVTFSSAQHGR.

The protein in the C-terminal section; belongs to the protein kinase superfamily. Ser/Thr protein kinase family. In the N-terminal section; belongs to the leguminous lectin family. As to quaternary structure, interacts with ABCG40.

Its subcellular location is the cell membrane. The catalysed reaction is L-seryl-[protein] + ATP = O-phospho-L-seryl-[protein] + ADP + H(+). The enzyme catalyses L-threonyl-[protein] + ATP = O-phospho-L-threonyl-[protein] + ADP + H(+). Functionally, promotes hydrogen peroxide H(2)O(2) production and cell death. Involved in resistance response to the pathogenic oomycetes Phytophthora infestans and Phytophthora capsici. This is L-type lectin-domain containing receptor kinase IX.1 from Arabidopsis thaliana (Mouse-ear cress).